The following is a 247-amino-acid chain: MNVILCSSNMLKGLYDISGVEVGQHLYWQIGGFQVHAQVLITSWVVIAILLGSVTVAVRNPQTIPTNGQNFFEYVLEFIRDLSKTQIGEEYGPWVPFIGTMFLFIFVSNWSGALLPWKLIELPHGELAAPTNDINTTVALALPTSVAYFYAGLTKKGLGYFGKYIQPTPILLPINILEDFTKPLSLSFRLFGNILADELVVVVLVSLVPLVVPIPVMFLGLFTSGIQALIFATLAAAYIGESMEGHH.

Helical transmembrane passes span 38 to 58, 95 to 115, 134 to 154, 199 to 219, and 220 to 240; these read QVLI…TVAV, VPFI…GALL, INTT…AGLT, LVVV…VMFL, and GLFT…AYIG.

The protein belongs to the ATPase A chain family. In terms of assembly, F-type ATPases have 2 components, CF(1) - the catalytic core - and CF(0) - the membrane proton channel. CF(1) has five subunits: alpha(3), beta(3), gamma(1), delta(1), epsilon(1). CF(0) has four main subunits: a, b, b' and c.

The protein localises to the plastid. It localises to the chloroplast thylakoid membrane. Its function is as follows. Key component of the proton channel; it plays a direct role in the translocation of protons across the membrane. The sequence is that of ATP synthase subunit a, chloroplastic from Acorus calamus var. americanus (American sweet flag).